We begin with the raw amino-acid sequence, 306 residues long: Eukaryotic translation initiation factor 2 subunit alpha (306 aa).

One can recognise an S1 motif domain in the interval 17–88; that stretch reads DELVVVNVRQ…EKGYIDLSKR (72 aa). Ser52 carries the post-translational modification Phosphoserine. At Thr179 the chain carries Phosphothreonine. Phosphoserine is present on residues Ser273, Ser295, Ser303, and Ser305.

The protein belongs to the eIF-2-alpha family. Eukaryotic translation initiation factor 2 eIF2 is a heterotrimeric complex composed of an alpha, a beta and a gamma subunit.

The protein resides in the cytoplasm. Its subcellular location is the cytosol. In terms of biological role, eIF-2 functions in the early steps of protein synthesis by forming a ternary complex with GTP and initiator tRNA. This complex binds to a 40S ribosomal subunit, followed by mRNA binding to form a 43S pre-initiation complex. Junction of the 60S ribosomal subunit to form the 80S initiation complex is preceded by hydrolysis of the GTP bound to eIF-2 and release of an eIF-2-GDP binary complex. In order for eIF-2 to recycle and catalyze another round of initiation, the GDP bound to eIF-2 must exchange with GTP by way of a reaction catalyzed by eIF2B. The protein is Eukaryotic translation initiation factor 2 subunit alpha (tif211) of Schizosaccharomyces pombe (strain 972 / ATCC 24843) (Fission yeast).